The following is a 148-amino-acid chain: 3-dehydroquinate dehydratase (148 aa).

Tyr26 functions as the Proton acceptor in the catalytic mechanism. 3 residues coordinate substrate: Asn75, His81, and Asp88. His101 serves as the catalytic Proton donor. Substrate is bound by residues 102–103 (LS) and Arg112.

Belongs to the type-II 3-dehydroquinase family. Homododecamer.

It carries out the reaction 3-dehydroquinate = 3-dehydroshikimate + H2O. It functions in the pathway metabolic intermediate biosynthesis; chorismate biosynthesis; chorismate from D-erythrose 4-phosphate and phosphoenolpyruvate: step 3/7. In terms of biological role, catalyzes a trans-dehydration via an enolate intermediate. This Shewanella frigidimarina (strain NCIMB 400) protein is 3-dehydroquinate dehydratase.